The sequence spans 449 residues: Na(+)-translocating NADH-quinone reductase subunit A (449 aa).

The protein belongs to the NqrA family. As to quaternary structure, composed of six subunits; NqrA, NqrB, NqrC, NqrD, NqrE and NqrF.

The enzyme catalyses a ubiquinone + n Na(+)(in) + NADH + H(+) = a ubiquinol + n Na(+)(out) + NAD(+). In terms of biological role, NQR complex catalyzes the reduction of ubiquinone-1 to ubiquinol by two successive reactions, coupled with the transport of Na(+) ions from the cytoplasm to the periplasm. NqrA to NqrE are probably involved in the second step, the conversion of ubisemiquinone to ubiquinol. The polypeptide is Na(+)-translocating NADH-quinone reductase subunit A (Actinobacillus pleuropneumoniae serotype 3 (strain JL03)).